The following is an 84-amino-acid chain: Exodeoxyribonuclease 7 small subunit (84 aa).

The protein belongs to the XseB family. As to quaternary structure, heterooligomer composed of large and small subunits.

The protein resides in the cytoplasm. It carries out the reaction Exonucleolytic cleavage in either 5'- to 3'- or 3'- to 5'-direction to yield nucleoside 5'-phosphates.. Bidirectionally degrades single-stranded DNA into large acid-insoluble oligonucleotides, which are then degraded further into small acid-soluble oligonucleotides. This is Exodeoxyribonuclease 7 small subunit from Bartonella quintana (strain Toulouse) (Rochalimaea quintana).